Here is a 452-residue protein sequence, read N- to C-terminus: Phenylalanine-4-hydroxylase (452 aa).

S16 is subject to Phosphoserine; by PKA. In terms of domain architecture, ACT spans 36 to 114 (SLIFSLKEEV…TVHELSRDKK (79 aa)). Fe cation is bound by residues H285, H290, and E330.

The protein belongs to the biopterin-dependent aromatic amino acid hydroxylase family. As to quaternary structure, homodimer and homotetramer. It depends on Fe(2+) as a cofactor. Phosphorylation at Ser-16 increases basal activity and facilitates activation by the substrate phenylalanine.

It carries out the reaction (6R)-L-erythro-5,6,7,8-tetrahydrobiopterin + L-phenylalanine + O2 = (4aS,6R)-4a-hydroxy-L-erythro-5,6,7,8-tetrahydrobiopterin + L-tyrosine. It functions in the pathway amino-acid degradation; L-phenylalanine degradation; acetoacetate and fumarate from L-phenylalanine: step 1/6. With respect to regulation, N-terminal region of PAH is thought to contain allosteric binding sites for phenylalanine and to constitute an 'inhibitory' domain that regulates the activity of a catalytic domain in the C-terminal portion of the molecule. Functionally, catalyzes the hydroxylation of L-phenylalanine to L-tyrosine. The chain is Phenylalanine-4-hydroxylase (PAH) from Homo sapiens (Human).